A 209-amino-acid chain; its full sequence is uncharacterized protein (209 aa).

An N-terminal signal peptide occupies residues 1-17; the sequence is MKKLVTGLLALSLFLAA. Residues 17-106 are disordered; sequence ACGQDSDQQK…SGQTTNNQKS (90 aa). Cys18 is lipidated: N-palmitoyl cysteine. Residue Cys18 is the site of S-diacylglycerol cysteine attachment. Residues 23-70 show a composition bias toward basic and acidic residues; it reads DQQKDSNKEKDDKAKTEQQDKKTNDSSKDKKDNKDDSKDVNKDNKDNS. Residues 71-106 are compositionally biased toward low complexity; the sequence is ANDNQQQSNSNATNNDQNQTNNNQSNSGQTTNNQKS.

It localises to the cell membrane. This is an uncharacterized protein from Staphylococcus aureus (strain MRSA252).